The chain runs to 344 residues: MVRARHQPGGLCLLLLLLCQFMEDRSAQAGNCWLRQAKNGRCQVLYKTELSKEECCSTGRLSTSWTEEDVNDNTLFKWMIFNGGAPNCIPCKETCENVDCGPGKKCRMNKKNKPRCVCAPDCSNITWKGPVCGLDGKTYRNECALLKARCKEQPELEVQYQGRCKKTCRDVFCPGSSTCVVDQTNNAYCVTCNRICPEPASSEQYLCGNDGVTYSSACHLRKATCLLGRSIGLAYEGKCIKAKSCEDIQCTGGKKCLWDFKVGRGRCSLCDELCPDSKSDEPVCASDNATYASECAMKEAACSSGVLLEVKHSGSCNSISEDTEEEEEDEDQDYSFPISSILEW.

The first 29 residues, 1 to 29, serve as a signal peptide directing secretion; it reads MVRARHQPGGLCLLLLLLCQFMEDRSAQA. The TB domain occupies 30–103; sequence GNCWLRQAKN…TCENVDCGPG (74 aa). Cystine bridges form between C32–C55, C42–C88, C56–C91, C95–C106, C100–C116, C118–C150, C122–C143, C132–C164, C168–C179, C173–C189, C192–C225, C196–C218, C207–C239, C245–C256, C250–C267, C270–C302, C274–C295, and C284–C316. A Follistatin-like 1 domain is found at 94-117; it reads TCENVDCGPGKKCRMNKKNKPRCV. A Kazal-like 1 domain is found at 112 to 166; the sequence is NKPRCVCAPDCSNITWKGPVCGLDGKTYRNECALLKARCKEQPELEVQYQGRCKK. N-linked (GlcNAc...) asparagine glycosylation is present at N124. The Follistatin-like 2 domain occupies 167 to 190; sequence TCRDVFCPGSSTCVVDQTNNAYCV. The Kazal-like 2 domain occupies 186 to 241; the sequence is NAYCVTCNRICPEPASSEQYLCGNDGVTYSSACHLRKATCLLGRSIGLAYEGKCIK. In terms of domain architecture, Follistatin-like 3 spans 244-268; it reads SCEDIQCTGGKKCLWDFKVGRGRCS. One can recognise a Kazal-like 3 domain in the interval 264 to 318; that stretch reads RGRCSLCDELCPDSKSDEPVCASDNATYASECAMKEAACSSGVLLEVKHSGSCNS. An N-linked (GlcNAc...) asparagine glycan is attached at N288. The segment at 314 to 344 is disordered; it reads GSCNSISEDTEEEEEDEDQDYSFPISSILEW. Positions 321–333 are enriched in acidic residues; that stretch reads EDTEEEEEDEDQD.

As to quaternary structure, interacts with GDF11. Interacts with activin A/INHBA. Interacts with MYOSTATIN/MSTN. As to expression, isoform 1 is the predominant isoform in serum but is undetectable in follicular fluid. In the embryo, strong expression is seen in the palatal epithelia, including the medial edge epithelial and midline epithelial seam of the palatal shelves. Less pronounced expression is also seen throughout the palatal shelf and tongue mesenchyme.

Its subcellular location is the secreted. It is found in the nucleus. The protein localises to the nucleolus. In terms of biological role, multifunctional regulatory protein whose primary function is to antagonize members of the transforming growth factor beta (TGF-beta) superfamily including activin, myostatin, GDF11 or bone morphogenetic proteins (BMPs). Mechanistically, binds to these ligands in the extracellular space, blocking their type II receptor-binding site to inhibit downstream signaling. Plays an essential role in muscle fiber formation and growth both by preventing the repressive effects of myostatin and through SMAD3/AKT/mTOR signaling independently of myostatin. Also promotes neural differentiation by antagonizing the action BMP4. Acts as a specific inhibitor of the biosynthesis and secretion of pituitary follicle stimulating hormone (FSH) by sequestering activin A/INHBA. On the other hand, translocates into the nucleus where it down-regulates rRNA synthesis and ribosome biogenesis to maintain cellular energy homeostasis by binding to rDNA. The sequence is that of Follistatin from Homo sapiens (Human).